A 342-amino-acid chain; its full sequence is 4-amino-5-hydroxymethyl-2-methylpyrimidine phosphate synthase (342 aa).

N6-(pyridoxal phosphate)lysine is present on K62. H66 is an active-site residue. 115-118 (GEFG) serves as a coordination point for pyridoxal 5'-phosphate. The CCCFC; essential for catalytic activity, may be the site of iron coordination signature appears at 195–199 (CCCFC).

This sequence belongs to the NMT1/THI5 family. As to quaternary structure, homodimer. Fe cation serves as cofactor.

It carries out the reaction N(6)-(pyridoxal phosphate)-L-lysyl-[4-amino-5-hydroxymethyl-2-methylpyrimidine phosphate synthase] + L-histidyl-[4-amino-5-hydroxymethyl-2-methylpyrimidine phosphate synthase] + 2 Fe(3+) + 4 H2O = L-lysyl-[4-amino-5-hydroxymethyl-2-methylpyrimidine phosphate synthase] + (2S)-2-amino-5-hydroxy-4-oxopentanoyl-[4-amino-5-hydroxymethyl-2-methylpyrimidine phosphate synthase] + 4-amino-2-methyl-5-(phosphooxymethyl)pyrimidine + 3-oxopropanoate + 2 Fe(2+) + 2 H(+). It functions in the pathway cofactor biosynthesis; thiamine diphosphate biosynthesis. In terms of biological role, responsible for the formation of the pyrimidine heterocycle in the thiamine biosynthesis pathway. Catalyzes the formation of hydroxymethylpyrimidine phosphate (HMP-P) from histidine and pyridoxal phosphate (PLP). The protein uses PLP and the active site histidine to form HMP-P, generating an inactive enzyme. The enzyme can only undergo a single turnover, which suggests it is a suicide enzyme. The protein is 4-amino-5-hydroxymethyl-2-methylpyrimidine phosphate synthase of Aspergillus parasiticus.